Here is a 339-residue protein sequence, read N- to C-terminus: Uroporphyrinogen decarboxylase (339 aa).

Substrate contacts are provided by residues 23–27 (RQAGR), Asp-72, Tyr-147, Thr-202, and His-315.

The protein belongs to the uroporphyrinogen decarboxylase family. As to quaternary structure, homodimer.

It localises to the cytoplasm. It carries out the reaction uroporphyrinogen III + 4 H(+) = coproporphyrinogen III + 4 CO2. The protein operates within porphyrin-containing compound metabolism; protoporphyrin-IX biosynthesis; coproporphyrinogen-III from 5-aminolevulinate: step 4/4. In terms of biological role, catalyzes the decarboxylation of four acetate groups of uroporphyrinogen-III to yield coproporphyrinogen-III. The chain is Uroporphyrinogen decarboxylase from Citrifermentans bemidjiense (strain ATCC BAA-1014 / DSM 16622 / JCM 12645 / Bem) (Geobacter bemidjiensis).